An 82-amino-acid polypeptide reads, in one-letter code: UPF0213 protein SH2523 (82 aa).

Residues Ala2–Lys77 form the GIY-YIG domain.

Belongs to the UPF0213 family.

The chain is UPF0213 protein SH2523 from Staphylococcus haemolyticus (strain JCSC1435).